Reading from the N-terminus, the 124-residue chain is Protein MGF 110-8L (124 aa).

The signal sequence occupies residues 1-16 (MKVLILVLLAVVILQA). 2 N-linked (GlcNAc...) asparagine; by host glycosylation sites follow: asparagine 76 and asparagine 94.

This sequence belongs to the asfivirus MGF 110 family.

Its function is as follows. Plays a role in virus cell tropism, and may be required for efficient virus replication in macrophages. This is Protein MGF 110-8L from Ornithodoros (relapsing fever ticks).